The chain runs to 661 residues: Altered inheritance of mitochondria protein 3-1 (661 aa).

Disordered stretches follow at residues 19 to 99 (TKTV…YSGY), 116 to 142 (AQNT…SQYN), 154 to 194 (QPAG…TFQS), 263 to 419 (LPQQ…DSSS), 431 to 473 (RNIP…SPGI), 487 to 563 (YAGH…RKDN), and 615 to 661 (EAAT…FVHS). Residues 37 to 58 (KDKDTHHTDHHEEDEYSEDYHT) show a composition bias toward basic and acidic residues. Low complexity predominate over residues 120–142 (PYSSPAQQQPVSPQPPVQNSQYN). Residues 263 to 318 (LPQQQQQQQQQPEYNTQLQQNQQLHNQQAYGQQQQIYSNNTQPQYVSQTQQTSYTQ) are compositionally biased toward low complexity. 2 stretches are compositionally biased toward polar residues: residues 319–328 (NAPPQQTRSP) and 356–371 (VNQT…NEAL). Residues 390–399 (THRDRGRASV) are compositionally biased toward basic and acidic residues. A compositionally biased stretch (polar residues) spans 406 to 419 (ENMQTNNSTIDSSS). Residues 434–447 (PAPAVGPPGAATRA) show a composition bias toward low complexity. Polar residues-rich tracts occupy residues 458 to 473 (SQSM…SPGI), 512 to 533 (RSTS…PSRD), and 541 to 552 (RSTVSSIQSSNR).

The protein belongs to the AIM3 family.

It is found in the membrane raft. The polypeptide is Altered inheritance of mitochondria protein 3-1 (AIM3-1) (Candida glabrata (strain ATCC 2001 / BCRC 20586 / JCM 3761 / NBRC 0622 / NRRL Y-65 / CBS 138) (Yeast)).